A 225-amino-acid chain; its full sequence is MRIVFDIGGSVLVPENPDIDFIKEIAYQLTKVSEDHEVAVVVGGGKLARKYIEVAEKFNSSETFKDFIGIQITRANAMLLIAALREKAYPVVVEDFWEAWKAVQLKKIPVMGGTHPGHTTDAVAALLAEFLKADLLVVITNVDGVYTADPKKDPTAKKIKKMKPEELLEIVGKGIEKAGSSSVIDPLAAKIIARSGIKTIVIGKEDAKDLFRVIKGDHNGTTIEP.

Residue aspartate 6 participates in Mg(2+) binding. Residue 9 to 10 coordinates ATP; it reads GS. Glycine 44 lines the UMP pocket. Residues glycine 45 and arginine 49 each coordinate ATP. UMP contacts are provided by residues aspartate 66 and 114–120; that span reads THPGHTT. Positions 120 and 121 each coordinate Mg(2+). Residues threonine 140, asparagine 141, tyrosine 146, and aspartate 149 each contribute to the ATP site. Glycine 179 lines the UMP pocket. Mg(2+) is bound at residue serine 182. Residue serine 182 participates in ATP binding.

It belongs to the UMP kinase family. As to quaternary structure, homohexamer; trimer of dimers.

The protein resides in the cytoplasm. It catalyses the reaction UMP + ATP = UDP + ADP. It participates in pyrimidine metabolism; CTP biosynthesis via de novo pathway; UDP from UMP (UMPK route): step 1/1. Inhibited by UTP. Functionally, catalyzes the reversible phosphorylation of UMP to UDP, with ATP as the most efficient phosphate donor. This chain is Uridylate kinase (pyrH), found in Pyrococcus furiosus (strain ATCC 43587 / DSM 3638 / JCM 8422 / Vc1).